The chain runs to 253 residues: Coenzyme F420:L-glutamate ligase (253 aa).

Residues 9-12, 38-39, and K43 contribute to the GTP site; these read LPEI and ST. Position 113 (D113) interacts with a divalent metal cation. N116 serves as a coordination point for GTP. D150, T151, and E208 together coordinate a divalent metal cation. 206–213 is a binding site for GTP; sequence SGEGDDGT.

The protein belongs to the CofE family. Homodimer. The cofactor is Mg(2+). Mn(2+) serves as cofactor. It depends on K(+) as a cofactor.

The enzyme catalyses oxidized coenzyme F420-0 + GTP + L-glutamate = oxidized coenzyme F420-1 + GDP + phosphate + H(+). The catalysed reaction is oxidized coenzyme F420-1 + GTP + L-glutamate = oxidized coenzyme F420-2 + GDP + phosphate + H(+). Its pathway is cofactor biosynthesis; coenzyme F420 biosynthesis. Catalyzes the GTP-dependent successive addition of two or more gamma-linked L-glutamates to the L-lactyl phosphodiester of 7,8-didemethyl-8-hydroxy-5-deazariboflavin (F420-0) to form coenzyme F420-0-glutamyl-glutamate (F420-2) or polyglutamated F420 derivatives. The protein is Coenzyme F420:L-glutamate ligase of Halobacterium salinarum (strain ATCC 29341 / DSM 671 / R1).